The following is a 396-amino-acid chain: Tryptophan synthase beta chain (396 aa).

Residue Lys-86 is modified to N6-(pyridoxal phosphate)lysine.

The protein belongs to the TrpB family. In terms of assembly, tetramer of two alpha and two beta chains. The cofactor is pyridoxal 5'-phosphate.

It catalyses the reaction (1S,2R)-1-C-(indol-3-yl)glycerol 3-phosphate + L-serine = D-glyceraldehyde 3-phosphate + L-tryptophan + H2O. It participates in amino-acid biosynthesis; L-tryptophan biosynthesis; L-tryptophan from chorismate: step 5/5. The beta subunit is responsible for the synthesis of L-tryptophan from indole and L-serine. The protein is Tryptophan synthase beta chain of Francisella philomiragia subsp. philomiragia (strain ATCC 25017 / CCUG 19701 / FSC 153 / O#319-036).